The chain runs to 286 residues: MRLIVVSGQSGAGKSVALRVLEDLGYYCVDNLPVSLLTAFIQSVQGSQQNVAVSIDIRNLPKEPSLVQDVLDQLKQNNDVSMLFLDASKETLLKRYSETRRIHPLSLSQSKPSLAQAIELEKQLLGPLKEQADLLLDSSNQSLHELSETVRMRIEGRERKDLVMVFQSFGFKYGLPTDADYVFDVRFLPNPHWEPDLRPLTGLDAPIKSFLEGHSEVMELKQQIQKFFEYWLPMLEKNNRSYLTIAIGCTGGKHRSVYLTQQLGEYFAQLGHQVQIRHTSLEKQQS.

8-15 is an ATP binding site; it reads GQSGAGKS. Residue 56-59 coordinates GTP; the sequence is DIRN.

This sequence belongs to the RapZ-like family.

Displays ATPase and GTPase activities. The protein is Nucleotide-binding protein VC0395_A2112/VC395_2645 of Vibrio cholerae serotype O1 (strain ATCC 39541 / Classical Ogawa 395 / O395).